A 455-amino-acid polypeptide reads, in one-letter code: L-serine dehydratase (455 aa).

Belongs to the iron-sulfur dependent L-serine dehydratase family. It depends on [4Fe-4S] cluster as a cofactor.

The enzyme catalyses L-serine = pyruvate + NH4(+). It participates in carbohydrate biosynthesis; gluconeogenesis. This is L-serine dehydratase (sdaA) from Streptomyces coelicolor (strain ATCC BAA-471 / A3(2) / M145).